We begin with the raw amino-acid sequence, 111 residues long: ATP-dependent Clp protease adapter protein ClpS (111 aa).

This sequence belongs to the ClpS family. As to quaternary structure, binds to the N-terminal domain of the chaperone ClpA.

Functionally, involved in the modulation of the specificity of the ClpAP-mediated ATP-dependent protein degradation. This is ATP-dependent Clp protease adapter protein ClpS from Leptospira interrogans serogroup Icterohaemorrhagiae serovar copenhageni (strain Fiocruz L1-130).